A 680-amino-acid chain; its full sequence is Coiled-coil domain-containing protein 138 (680 aa).

A Phosphothreonine modification is found at threonine 63. The residue at position 64 (serine 64) is a Phosphoserine. Residues 260–339 adopt a coiled-coil conformation; sequence KEQHGTEIEH…YEFMTVQRLK (80 aa). The segment at 390–410 is disordered; it reads EPEEPGVDGGKPPAKPSQRSD. Residue serine 484 is modified to Phosphoserine.

In Mus musculus (Mouse), this protein is Coiled-coil domain-containing protein 138 (Ccdc138).